The sequence spans 365 residues: MINTTSRRKIEHLKLCAESPVEARQVSAGFEDVTLIHRALPELNMDELDLSVDFLGKRIKAPFLIASITGGHPDTIPVNAALAAAAEELGVGIGVGSQRAAIDDPSQEDSFRVVRDEAPDAFVYGNVGAAQIRQYGVEGVEKLIEMIDADALAIHLNFLQEAVQPEGDRDATGCLDMITEICSQIKTPVIVKETGAGISREDAILFQKAGVSAIDVGGAGGTSWAGVEVYRAKESRDSVSERLGELFWDFGIPTVASLIESRVSLPLIATGGIRNGLDIAKSIALGASAASAALPFVGPSLEGKESVVRVLSCMLEEFKAAMFLCGCGNIKDLHNSPVVVTGWTREYLEQRGFNVKDLSLPGNAL.

8–9 (RK) provides a ligand contact to substrate. FMN contacts are provided by residues 67 to 69 (SIT), serine 97, and asparagine 126. 97–99 (SQR) lines the substrate pocket. Glutamine 160 contributes to the substrate binding site. Glutamate 161 contacts Mg(2+). FMN-binding positions include lysine 192, threonine 222, 272–274 (GIR), and 293–294 (AL).

The protein belongs to the IPP isomerase type 2 family. Homooctamer. Dimer of tetramers. FMN is required as a cofactor. The cofactor is NADPH. Requires Mg(2+) as cofactor.

Its subcellular location is the cytoplasm. It carries out the reaction isopentenyl diphosphate = dimethylallyl diphosphate. Functionally, involved in the biosynthesis of isoprenoids. Catalyzes the 1,3-allylic rearrangement of the homoallylic substrate isopentenyl (IPP) to its allylic isomer, dimethylallyl diphosphate (DMAPP). This Methanosarcina mazei (strain ATCC BAA-159 / DSM 3647 / Goe1 / Go1 / JCM 11833 / OCM 88) (Methanosarcina frisia) protein is Isopentenyl-diphosphate delta-isomerase.